Reading from the N-terminus, the 471-residue chain is 6-phosphofructo-2-kinase/fructose-2,6-bisphosphatase 1 (471 aa).

Ser2 carries the N-acetylserine modification. The segment at 2–250 (SREMGELTQT…AYYLMNIHVT (249 aa)) is 6-phosphofructo-2-kinase. Ser33 carries the post-translational modification Phosphoserine; by PKA. 49 to 57 (GLPARGKTY) is an ATP binding site. Beta-D-fructose 6-phosphate contacts are provided by Arg82 and Arg105. The active site involves Asp131. The beta-D-fructose 6-phosphate site is built by Thr133 and Arg139. At Ser141 the chain carries Phosphoserine. The active site involves Cys161. 170–175 (NIKQVK) serves as a coordination point for ATP. Lys175, Arg196, and Tyr200 together coordinate beta-D-fructose 6-phosphate. The segment at 251–471 (PRSIYLCRHG…EALDTVPAHY (221 aa)) is fructose-2,6-bisphosphatase. A beta-D-fructose 2,6-bisphosphate-binding site is contributed by Arg258. The Tele-phosphohistidine intermediate role is filled by His259. 3 residues coordinate beta-D-fructose 2,6-bisphosphate: Asn265, Gly271, and Arg308. The active-site Proton donor/acceptor is the Glu328. Tyr339, Arg353, Lys357, Tyr368, Gln394, and Arg398 together coordinate beta-D-fructose 2,6-bisphosphate. 350–353 (FALR) is an ATP binding site. ATP contacts are provided by residues 394 to 398 (QAVMR) and Tyr430.

The protein in the C-terminal section; belongs to the phosphoglycerate mutase family. In terms of assembly, homodimer. As to expression, liver.

The enzyme catalyses beta-D-fructose 2,6-bisphosphate + H2O = beta-D-fructose 6-phosphate + phosphate. The catalysed reaction is beta-D-fructose 6-phosphate + ATP = beta-D-fructose 2,6-bisphosphate + ADP + H(+). With respect to regulation, phosphorylation at Ser-33 inhibits the kinase and activates the bisphosphatase. Its function is as follows. Synthesis and degradation of fructose 2,6-bisphosphate. This chain is 6-phosphofructo-2-kinase/fructose-2,6-bisphosphatase 1, found in Rattus norvegicus (Rat).